The sequence spans 475 residues: SAM50-like protein SPAC17C9.06 (475 aa).

The region spanning 44–130 (VGISSIRVTG…LDVTIQVKEK (87 aa)) is the POTRA domain.

The protein belongs to the SAM50/omp85 family. Associates with the mitochondrial contact site and cristae organizing system (MICOS) complex (also known as MINOS or MitOS complex).

It is found in the mitochondrion outer membrane. Functionally, may be required for the assembly pathway of mitochondrial outer membrane proteins. The polypeptide is SAM50-like protein SPAC17C9.06 (Schizosaccharomyces pombe (strain 972 / ATCC 24843) (Fission yeast)).